The sequence spans 69 residues: MTVKICDCEGECCKDSCHCGSTCLPSCSGGEKCKCDHSTGSPQCKSCGEKCKCETTCTCEKSKCNCEKC.

It belongs to the metallothionein superfamily. Type 13 family.

In terms of biological role, critical role in copper (specific) homeostasis and detoxification. May protect by directly chelating and sequestering copper ions. The polypeptide is Metallothionein-like protein CRS5 (CRS5) (Saccharomyces cerevisiae (strain RM11-1a) (Baker's yeast)).